The chain runs to 652 residues: Fimbrin-4 (652 aa).

Calponin-homology (CH) domains follow at residues 116–233, 261–364, 388–494, and 509–617; these read ESEK…KIQL, LAPE…HHRN, SREE…RYTM, and DITE…NWSL. Actin-binding stretches follow at residues 116–364 and 388–617; these read ESEK…HHRN and SREE…NWSL. A disordered region spans residues 623 to 652; the sequence is TESTVSDDTDVSSVTEEISNLSTDDGSSDV. Positions 640-652 are enriched in polar residues; the sequence is ISNLSTDDGSSDV.

As to quaternary structure, interacts with F-actin.

Its subcellular location is the cytoplasm. The protein localises to the cytoskeleton. Functionally, cross-links actin filaments (F-actin). Stabilizes and prevents F-actin depolymerization mediated by profilin. May regulate actin cytoarchitecture, cell cycle, cell division, cell elongation and cytoplasmic tractus. The chain is Fimbrin-4 from Arabidopsis thaliana (Mouse-ear cress).